A 946-amino-acid polypeptide reads, in one-letter code: Protein translocase subunit SecA (946 aa).

ATP-binding positions include Gln-87, 105–109 (GEGKT), and Asp-524. Disordered stretches follow at residues 872-892 (PEQP…NTGE) and 904-946 (PADT…GRYA). Basic and acidic residues predominate over residues 907–917 (TVEKSERDPNR). Zn(2+) contacts are provided by Cys-930, Cys-932, Cys-941, and His-942. Positions 936–946 (KKYKHCHGRYA) are enriched in basic residues.

It belongs to the SecA family. As to quaternary structure, monomer and homodimer. Part of the essential Sec protein translocation apparatus which comprises SecA, SecYEG and auxiliary proteins SecDF-YajC and YidC. Zn(2+) serves as cofactor.

Its subcellular location is the cell inner membrane. The protein resides in the cytoplasm. It catalyses the reaction ATP + H2O + cellular proteinSide 1 = ADP + phosphate + cellular proteinSide 2.. Functionally, part of the Sec protein translocase complex. Interacts with the SecYEG preprotein conducting channel. Has a central role in coupling the hydrolysis of ATP to the transfer of proteins into and across the cell membrane, serving both as a receptor for the preprotein-SecB complex and as an ATP-driven molecular motor driving the stepwise translocation of polypeptide chains across the membrane. The chain is Protein translocase subunit SecA from Rhodopseudomonas palustris (strain BisB5).